The following is a 201-amino-acid chain: MARRPYDMLFKLLLIGDSGVGKTCILYRFSDDAFNTTFISTIGIDFKIKTIELKGKKIKLQIWDTAGQERFHTITTSYYRGAMGIMLVYDITNAKSFDNIAKWLRNIDEHASEDVVKMILGNKCDMSDRRVVSRERGEKIAQDHGISFHETSAKLNVHVDTAFYDLAEAILAKMPDSTDEQSRDTVNPVQPQRQSSSGGCC.

A GTP-binding site is contributed by 16–23 (GDSGVGKT). The Effector region motif lies at 38–46 (FISTIGIDF). GTP-binding positions include 64 to 68 (DTAGQ), 122 to 125 (NKCD), and 152 to 154 (SAK). The interval 175–201 (PDSTDEQSRDTVNPVQPQRQSSSGGCC) is disordered. Residues 184 to 201 (DTVNPVQPQRQSSSGGCC) show a composition bias toward polar residues. S-geranylgeranyl cysteine attachment occurs at residues C200 and C201.

Belongs to the small GTPase superfamily. Rab family. In terms of assembly, interacts (GTP-bound form) with ehbp-1 (via C-terminal coiled coil). Interacts (GTP-bound form) with cnt-1 (via C-terminal ankyrin repeat). Interacts (GTP-bound form) with rab-5 GAP, tbc-2 (via putative coiled coil domain). Interacts (GTP-bound form) with amph-1. In terms of tissue distribution, almost ubiquitously expressed. Expressed in intestine, hypodermis, seam cells, body-wall muscles, many neurons, oviduct sheath cell, spermatheca, coelomocytes and pharyngeal and nerve ring.

It localises to the early endosome membrane. The protein resides in the late endosome membrane. Its subcellular location is the golgi apparatus membrane. It is found in the endosome membrane. The enzyme catalyses GTP + H2O = GDP + phosphate + H(+). Its activity is regulated as follows. Rab activation is generally mediated by a guanine exchange factor (GEF), while inactivation through hydrolysis of bound GTP is catalyzed by a GTPase activating protein (GAP). Tbc-4 is a likely GAP of this rab. Denn-4 is a putative GEF of this rab. In terms of biological role, the small GTPases Rab are key regulators of intracellular membrane trafficking, from the formation of transport vesicles to their fusion with membranes. Rabs cycle between an inactive GDP-bound form and an active GTP-bound form that is able to recruit to membranes different set of downstream effectors directly responsible for vesicle formation, movement, tethering and fusion. Required for basolateral endocytic recycling, the return of macromolecules and fluid from endosomes to the plasma membrane, in polarized epithelial cells of the intestine upstream of rme-1. Involved in the formation of the endosomal tubular network that is required for basolateral recycling of clathrin-independent endocytic cargo such as daf-4 in the intestine. Required for the recruitment of cnt-1 effector to endosomal membranes in the intestinal epithelium, which is important for the regulation of levels of endosomal phosphatidylinositol-4,5-bisphosphate, a key phosphoinositide in membrane traffic, and for the recruitment of endosomal membrane-bending proteins, rme-1 and sdpn-1. Recruits the rab-5 GTPase-activating protein tbc-2 to endosomes where it then inactivates rab-5 resulting in removal of rab-5 from membranes, which is necessary for cargo transport from early endosomes to recycling endosomes in the basolateral intestine. Regulates recycling of synaptic membrane AMPA glutamate receptor, glr-1, from intracellular endosomal compartments back to synapses in a cholesterol-dependent endocytosis pathway functioning after clathrin-independent endocytosis in command interneurons. Regulates neuropeptide release from dense core vesicles (DCVs) of cholinergic motoneurons in cooperation with rab-5. They reciprocally recruit each other's inactivating GAP molecule leading to local exclusion of one or the other rab protein at the Golgi-endosomal interphase at an essential stage during DCV sorting. Regulates membrane trafficking of membranes and dendrite proteins from the Golgi and/or endosomal compartments to plasma membrane during dendrite morphogenesis together with the exocyst complex in the multi-dendritic PVD sensory neurons acting in a cell-autonomous manner and requiring its GTPase activity. Functions cell-autonomously together with the exocyst complex to regulate dendrite morphogenesis and anterior-posterior patterning of the PVD neurons dendritic arbor by balancing the anterograde and retrograde transport via molecular motors unc-116 (kinesin heavy chain) and dhc-1 (dynein heavy chain) to appropriately transport branching factors, such as dma-1, to the specific subcellular regions of the developing dendrite in its GTPase activity-dependent manner. The protein is Ras-related protein Rab-10 of Caenorhabditis elegans.